A 157-amino-acid polypeptide reads, in one-letter code: Large ribosomal subunit protein uL15 (157 aa).

The segment at 1-56 (MRLEDIRPQPGSTRRRRRLGRGIAAGQGASCGKGMRGQKARKGGGPRPGFEGGQTP) is disordered. The segment covering 23–35 (IAAGQGASCGKGM) has biased composition (gly residues).

It belongs to the universal ribosomal protein uL15 family. Part of the 50S ribosomal subunit.

Functionally, binds to the 23S rRNA. This is Large ribosomal subunit protein uL15 from Synechococcus sp. (strain JA-3-3Ab) (Cyanobacteria bacterium Yellowstone A-Prime).